We begin with the raw amino-acid sequence, 362 residues long: Protein RecA (362 aa).

Position 67-74 (67-74) interacts with ATP; it reads GPESSGKT. Residues 337–356 are compositionally biased toward low complexity; the sequence is VADAPADSAPAPVAAVAPKA. Residues 337-362 are disordered; sequence VADAPADSAPAPVAAVAPKASARKSA.

This sequence belongs to the RecA family.

It localises to the cytoplasm. Its function is as follows. Can catalyze the hydrolysis of ATP in the presence of single-stranded DNA, the ATP-dependent uptake of single-stranded DNA by duplex DNA, and the ATP-dependent hybridization of homologous single-stranded DNAs. It interacts with LexA causing its activation and leading to its autocatalytic cleavage. The sequence is that of Protein RecA from Clavibacter michiganensis subsp. michiganensis (strain NCPPB 382).